Consider the following 270-residue polypeptide: Eukaryotic translation initiation factor 2 subunit beta (270 aa).

The segment at 1-38 (MADEEQMERKEEATEIAPFDPTKKKKKKKVVIQDPADE) is disordered.

This sequence belongs to the eIF-2-beta/eIF-5 family. Eukaryotic translation initiation factor 2 eIF2 is a heterotrimeric complex composed of an alpha, a beta and a gamma subunit.

It localises to the cytoplasm. The protein resides in the cytosol. Component of the eIF2 complex that functions in the early steps of protein synthesis by forming a ternary complex with GTP and initiator tRNA. This complex binds to a 40S ribosomal subunit, followed by mRNA binding to form a 43S pre-initiation complex (43S PIC). Junction of the 60S ribosomal subunit to form the 80S initiation complex is preceded by hydrolysis of the GTP bound to eIF2 and release of an eIF2-GDP binary complex. In order for eIF2 to recycle and catalyze another round of initiation, the GDP bound to eIF2 must exchange with GTP by way of a reaction catalyzed by eIF2B. This Triticum aestivum (Wheat) protein is Eukaryotic translation initiation factor 2 subunit beta.